The primary structure comprises 254 residues: MWDPNKYLAFADHRGRPFYELLSRVDARSPRRVVDLGCGPGNLTVSLAERWPDAVLEASDSSPEMVEAARERGLDAGRQDVRDWTPKPDTDVVVSNAALQWVPEHRELLRRWPTQLPSGAWIAVQVPGNFDAPSHTIVRDLASRERWSRSLPDVPFRASTVVDDPADYAGLLADAGCAVDAWETTYVQRLTGENPVLEWITGTALRPVKDALSAPEWDLFREELAPLLDEAYPRRPDGSTFFPFRRIFVVAQVQ.

This sequence belongs to the methyltransferase superfamily. Tam family.

The protein resides in the cytoplasm. The catalysed reaction is trans-aconitate + S-adenosyl-L-methionine = (E)-3-(methoxycarbonyl)pent-2-enedioate + S-adenosyl-L-homocysteine. In terms of biological role, catalyzes the S-adenosylmethionine monomethyl esterification of trans-aconitate. The sequence is that of Trans-aconitate 2-methyltransferase from Rhodococcus jostii (strain RHA1).